A 575-amino-acid chain; its full sequence is Proline--tRNA ligase (575 aa).

It belongs to the class-II aminoacyl-tRNA synthetase family. ProS type 1 subfamily. As to quaternary structure, homodimer.

It localises to the cytoplasm. The enzyme catalyses tRNA(Pro) + L-proline + ATP = L-prolyl-tRNA(Pro) + AMP + diphosphate. In terms of biological role, catalyzes the attachment of proline to tRNA(Pro) in a two-step reaction: proline is first activated by ATP to form Pro-AMP and then transferred to the acceptor end of tRNA(Pro). As ProRS can inadvertently accommodate and process non-cognate amino acids such as alanine and cysteine, to avoid such errors it has two additional distinct editing activities against alanine. One activity is designated as 'pretransfer' editing and involves the tRNA(Pro)-independent hydrolysis of activated Ala-AMP. The other activity is designated 'posttransfer' editing and involves deacylation of mischarged Ala-tRNA(Pro). The misacylated Cys-tRNA(Pro) is not edited by ProRS. This chain is Proline--tRNA ligase, found in Heliobacterium modesticaldum (strain ATCC 51547 / Ice1).